The primary structure comprises 569 residues: Proline--tRNA ligase (569 aa).

The protein belongs to the class-II aminoacyl-tRNA synthetase family. ProS type 1 subfamily. Homodimer.

The protein resides in the cytoplasm. It catalyses the reaction tRNA(Pro) + L-proline + ATP = L-prolyl-tRNA(Pro) + AMP + diphosphate. Catalyzes the attachment of proline to tRNA(Pro) in a two-step reaction: proline is first activated by ATP to form Pro-AMP and then transferred to the acceptor end of tRNA(Pro). As ProRS can inadvertently accommodate and process non-cognate amino acids such as alanine and cysteine, to avoid such errors it has two additional distinct editing activities against alanine. One activity is designated as 'pretransfer' editing and involves the tRNA(Pro)-independent hydrolysis of activated Ala-AMP. The other activity is designated 'posttransfer' editing and involves deacylation of mischarged Ala-tRNA(Pro). The misacylated Cys-tRNA(Pro) is not edited by ProRS. This chain is Proline--tRNA ligase, found in Legionella pneumophila (strain Paris).